The primary structure comprises 83 residues: Large ribosomal subunit protein bL31B (83 aa).

Belongs to the bacterial ribosomal protein bL31 family. Type B subfamily. As to quaternary structure, part of the 50S ribosomal subunit.

Functionally, binds the 23S rRNA. The chain is Large ribosomal subunit protein bL31B from Hydrogenovibrio crunogenus (strain DSM 25203 / XCL-2) (Thiomicrospira crunogena).